Reading from the N-terminus, the 453-residue chain is UDP-glycosyltransferase 79B3 (453 aa).

UDP-alpha-D-glucose is bound by residues S266, 325–327 (VQQ), 342–350 (HCGFGSMWE), and 364–367 (LGDQ).

It belongs to the UDP-glycosyltransferase family.

This Arabidopsis thaliana (Mouse-ear cress) protein is UDP-glycosyltransferase 79B3 (UGT79B3).